The sequence spans 583 residues: Isocitrate dehydrogenase kinase/phosphatase (583 aa).

ATP is bound by residues A315 to M321 and K336. The active site involves D371.

Belongs to the AceK family.

The protein resides in the cytoplasm. The catalysed reaction is L-seryl-[isocitrate dehydrogenase] + ATP = O-phospho-L-seryl-[isocitrate dehydrogenase] + ADP + H(+). In terms of biological role, bifunctional enzyme which can phosphorylate or dephosphorylate isocitrate dehydrogenase (IDH) on a specific serine residue. This is a regulatory mechanism which enables bacteria to bypass the Krebs cycle via the glyoxylate shunt in response to the source of carbon. When bacteria are grown on glucose, IDH is fully active and unphosphorylated, but when grown on acetate or ethanol, the activity of IDH declines drastically concomitant with its phosphorylation. In Salmonella agona (strain SL483), this protein is Isocitrate dehydrogenase kinase/phosphatase.